Here is an 810-residue protein sequence, read N- to C-terminus: MAELNLSNLTEADIITKCVMPAILNAGWDNTTQIRQEVKLRDGKVIVRGKVAARRTVKSADIVLYHKPGIPLAVIEAKANKHEIGKGMQQGIEYARLLDVPFVFATNGDGFIFRDATAAEGECLEKQITLDDFPSPAELWQKFCLWKGYTQAQLPVITQDYYDDGSGKSPRYYQLQAINKTIEAVSNGQNRVLLVMATGTGKTYTAFQIIWRLWKSKNKKRILFLADRNILVDQTKNNDFQPFGTAMTKVSGRTIDPAYEIHLALYQAITGPEEDQKAFKQVAPDFFDLIVIDECHRGSASEDSAWREILDYFSSATQIGLTATPKETHEVSSTDYFGDPVYVYSLKEGIEDGFLAPYKVVRVDIDVDLQGWRPTKGQTDLNGEVIDDRIYNQKDFDRTMVIDERTELVARTITDYLKRTNPMDKTIVFCNDIDHAERMRRALVNLNPEQVKKNDKYVMKITGDDEIGKAQLDNFINPKKPYPVIATTSELMTTGVDAKTCKLVVLDQNIQSMTKFKQIIGRGTRIDERYGKLWFTILDFKKATELFADERFDGIPEKVMDTTPEDIADPESDFEEKLEEISEHDEEQVTGVDEPPAPPYQVTDTDDVGPLPEEDEKKIRKFHVNGVAVGVIAQRVQYYDADGKLVTESFKDYTRKTLLKEYASLDDFTRKWQDADRKEAIIHELEQQGIIWEVLAEEVGKDLDPFDMLCHVVYGQPPLTRKERAENVRKRNYFTKYSEAAQAVLDNLLDKYADAGVQEIESIQVLKLKPFDSMGTLPEIIKTGFGDRNGYNQALSELENEIYQLPPRSA.

The 161-residue stretch at glutamate 183 to valine 343 folds into the Helicase ATP-binding domain. Residue alanine 197–threonine 203 coordinates ATP. The Helicase C-terminal domain occupies threonine 412–glutamate 575. Residues leucine 578–glutamine 588 are compositionally biased toward acidic residues. The segment at leucine 578–valine 608 is disordered.

This sequence belongs to the HsdR family. As to quaternary structure, the type I restriction/modification system is composed of three polypeptides R, M and S. The restriction enzyme has stoichiometry R(2)M(2)S(1) while the methyltransferase is M(2)S(1).

It catalyses the reaction Endonucleolytic cleavage of DNA to give random double-stranded fragments with terminal 5'-phosphates, ATP is simultaneously hydrolyzed.. In terms of biological role, the subtype B restriction (R) subunit of a type I restriction enzyme that recognizes 5'-GAGN(7)GTCA-3' and cleaves a random distance away. Subunit R is required for both nuclease and ATPase activities, but not for modification. After locating a non-methylated recognition site, the enzyme complex serves as a molecular motor that translocates DNA in an ATP-dependent manner until a collision occurs that triggers cleavage. The polypeptide is Type I restriction enzyme EcoAI endonuclease subunit (Escherichia coli).